The primary structure comprises 110 residues: Large ribosomal subunit protein uL22 (110 aa).

It belongs to the universal ribosomal protein uL22 family. As to quaternary structure, part of the 50S ribosomal subunit.

Functionally, this protein binds specifically to 23S rRNA; its binding is stimulated by other ribosomal proteins, e.g. L4, L17, and L20. It is important during the early stages of 50S assembly. It makes multiple contacts with different domains of the 23S rRNA in the assembled 50S subunit and ribosome. Its function is as follows. The globular domain of the protein is located near the polypeptide exit tunnel on the outside of the subunit, while an extended beta-hairpin is found that lines the wall of the exit tunnel in the center of the 70S ribosome. The sequence is that of Large ribosomal subunit protein uL22 from Glaesserella parasuis serovar 5 (strain SH0165) (Haemophilus parasuis).